A 449-amino-acid chain; its full sequence is Histidinol dehydrogenase (449 aa).

NAD(+)-binding residues include Y135, Q199, and N229. Substrate is bound by residues T252, Q274, and H277. Q274 and H277 together coordinate Zn(2+). Active-site proton acceptor residues include E343 and H344. Substrate-binding residues include H344, D377, E431, and H436. D377 provides a ligand contact to Zn(2+). H436 provides a ligand contact to Zn(2+).

It belongs to the histidinol dehydrogenase family. Zn(2+) serves as cofactor.

It carries out the reaction L-histidinol + 2 NAD(+) + H2O = L-histidine + 2 NADH + 3 H(+). Its pathway is amino-acid biosynthesis; L-histidine biosynthesis; L-histidine from 5-phospho-alpha-D-ribose 1-diphosphate: step 9/9. Catalyzes the sequential NAD-dependent oxidations of L-histidinol to L-histidinaldehyde and then to L-histidine. The protein is Histidinol dehydrogenase of Corynebacterium diphtheriae (strain ATCC 700971 / NCTC 13129 / Biotype gravis).